The sequence spans 189 residues: MATTVTPEPLTALSRWYLYAIHGYFCEVMFTAAWEFVVNCNWKFPGVTSVWALFIYGTCILIVERMYLCLKDRCNVLLRCIIYTLWTYFWEFGTGFLLRQFNACPWDYSEFKYNFMGLITAEYAVPWFCASFIVERLVIRNTLRLRFDEVAESGQAEERLDRGGGGRGGRRGRGARAGATSANGYVKVD.

The Cytoplasmic segment spans residues 1–17 (MATTVTPEPLTALSRWY). The helical transmembrane segment at 18–38 (LYAIHGYFCEVMFTAAWEFVV) threads the bilayer. Residues 39–43 (NCNWK) are Extracellular-facing. A helical membrane pass occupies residues 44 to 64 (FPGVTSVWALFIYGTCILIVE). The Cytoplasmic portion of the chain corresponds to 65 to 75 (RMYLCLKDRCN). A helical membrane pass occupies residues 76–96 (VLLRCIIYTLWTYFWEFGTGF). The Extracellular portion of the chain corresponds to 97 to 114 (LLRQFNACPWDYSEFKYN). The helical transmembrane segment at 115–135 (FMGLITAEYAVPWFCASFIVE) threads the bilayer. The Cytoplasmic portion of the chain corresponds to 136-189 (RLVIRNTLRLRFDEVAESGQAEERLDRGGGGRGGRRGRGARAGATSANGYVKVD). The tract at residues 158–189 (ERLDRGGGGRGGRRGRGARAGATSANGYVKVD) is disordered.

Belongs to the TMEM229 family.

It localises to the membrane. The protein is Transmembrane protein 229b (tmem229b) of Danio rerio (Zebrafish).